The following is a 296-amino-acid chain: Homoserine kinase (296 aa).

84–94 is a binding site for ATP; the sequence is PLARGLGSSSS.

This sequence belongs to the GHMP kinase family. Homoserine kinase subfamily.

It localises to the cytoplasm. The catalysed reaction is L-homoserine + ATP = O-phospho-L-homoserine + ADP + H(+). The protein operates within amino-acid biosynthesis; L-threonine biosynthesis; L-threonine from L-aspartate: step 4/5. Catalyzes the ATP-dependent phosphorylation of L-homoserine to L-homoserine phosphate. The sequence is that of Homoserine kinase (thrB) from Lactococcus lactis subsp. cremoris (Streptococcus cremoris).